Consider the following 396-residue polypeptide: Lipid-A-disaccharide synthase (396 aa).

The protein belongs to the LpxB family.

The enzyme catalyses a lipid X + a UDP-2-N,3-O-bis[(3R)-3-hydroxyacyl]-alpha-D-glucosamine = a lipid A disaccharide + UDP + H(+). The protein operates within bacterial outer membrane biogenesis; LPS lipid A biosynthesis. Condensation of UDP-2,3-diacylglucosamine and 2,3-diacylglucosamine-1-phosphate to form lipid A disaccharide, a precursor of lipid A, a phosphorylated glycolipid that anchors the lipopolysaccharide to the outer membrane of the cell. The chain is Lipid-A-disaccharide synthase from Rhodopseudomonas palustris (strain BisB18).